Here is a 658-residue protein sequence, read N- to C-terminus: Interferon-induced GTP-binding protein Mx1 (658 aa).

N-acetylmethionine is present on methionine 1. Positions 1 to 20 (MVNSKGKITDSDPGSSHLLL) are disordered. In terms of domain architecture, Dynamin-type G spans 65–338 (DLALPAIAVI…LITHICKTLP (274 aa)). Positions 75 to 82 (GDQSSGKS) are G1 motif. 75–82 (GDQSSGKS) lines the GTP pocket. The segment at 100–102 (VTR) is G2 motif. The interval 176 to 179 (DLPG) is G3 motif. GTP is bound by residues 176 to 180 (DLPGI) and 245 to 248 (TKPD). The interval 245-248 (TKPD) is G4 motif. A G5 motif region spans residues 277-280 (KCRG). The segment at 339–364 (LLENQIKENYEKITEELQKYGSDVPE) is bundle signaling element (BSE). The segment at 364–531 (EEEHEKMFFL…HFQMEQIVYC (168 aa)) is middle domain. Residues 365–628 (EEHEKMFFLI…KDTHNWLLKE (264 aa)) are stalk. The critical for lipid-binding stretch occupies residues 551–554 (KDRK). Positions 570–658 (LSDIFEHLLA…ARRRLAKFPG (89 aa)) constitute a GED domain.

Belongs to the TRAFAC class dynamin-like GTPase superfamily. Dynamin/Fzo/YdjA family. In terms of assembly, homooligomer. Oligomerizes into multimeric filamentous or ring-like structures by virtue of its stalk domain. Oligomerization is critical for GTPase activity, protein stability, and recognition of viral target structures. Interacts with TRPC1, TRPC3, TRPC4, TRPC5, TRPC6 and TRPC7. Interacts with HSPA5. Interacts with TUBB/TUBB5. Interacts with DDX39A and DDX39B. In terms of processing, ISGylated.

The protein localises to the cytoplasm. It localises to the endoplasmic reticulum membrane. The protein resides in the perinuclear region. Functionally, interferon-induced dynamin-like GTPase with antiviral activity. This is Interferon-induced GTP-binding protein Mx1 (MX1) from Eumetopias jubatus (Steller sea lion).